The chain runs to 230 residues: Thiamine-triphosphatase (230 aa).

Ala2 carries the N-acetylalanine modification. Residues 5–201 enclose the CYTH domain; the sequence is LIEVERKFLP…AKLIVYLQRF (197 aa). Residues Glu7 and Glu9 each contribute to the Mg(2+) site. Positions 11, 55, 57, 65, and 125 each coordinate substrate. The Mg(2+) site is built by Asp145, Glu157, and Glu159. Glu157 contributes to the substrate binding site. Substrate is bound at residue Lys193.

The protein belongs to the ThTPase family. In terms of assembly, monomer. It depends on Mg(2+) as a cofactor. In terms of tissue distribution, widely expressed but at a low level.

The protein resides in the cytoplasm. It catalyses the reaction thiamine triphosphate + H2O = thiamine diphosphate + phosphate + H(+). Its function is as follows. Hydrolase highly specific for thiamine triphosphate (ThTP). The chain is Thiamine-triphosphatase (THTPA) from Homo sapiens (Human).